The following is a 147-amino-acid chain: uncharacterized protein (147 aa).

The HTH marR-type domain occupies 1–137 (MRDNTIGSLI…LYELMTKVHK (137 aa)). A DNA-binding region (H-T-H motif) is located at residues 53–76 (QMELAEKVTVTQGGISRMLTRLEK).

This is an uncharacterized protein from Bacillus thuringiensis subsp. konkukian (strain 97-27).